A 91-amino-acid polypeptide reads, in one-letter code: Putative transmembrane protein encoded by LINC00862 (91 aa).

Residues 49-69 form a helical membrane-spanning segment; sequence IMALILMPSLHCFGNILILLF.

It localises to the membrane. This chain is Putative transmembrane protein encoded by LINC00862 (LINC00862), found in Homo sapiens (Human).